A 533-amino-acid chain; its full sequence is DNA-directed RNA polymerase III subunit RPC3 (533 aa).

Residues 162–181 (LVPDTDSSDRGPPPPAPTLV) form a disordered region. At S194 the chain carries Phosphoserine. The interval 197–228 (GKGKRRRSSDEDATGEPKAKKPRYTDNKEPSP) is disordered. Basic and acidic residues predominate over residues 211–227 (GEPKAKKPRYTDNKEPS).

It belongs to the eukaryotic RPC3/POLR3C RNA polymerase subunit family. Component of the RNA polymerase III complex consisting of 17 subunits: a ten-subunit horseshoe-shaped catalytic core composed of POLR3A/RPC1, POLR3B/RPC2, POLR1C/RPAC1, POLR1D/RPAC2, POLR3K/RPC10, POLR2E/RPABC1, POLR2F/RPABC2, POLR2H/RPABC3, POLR2K/RPABC4 and POLR2L/RPABC5; a mobile stalk composed of two subunits POLR3H/RPC8 and CRCP/RPC9, protruding from the core and functioning primarily in transcription initiation; and additional subunits homologous to general transcription factors of the RNA polymerase II machinery, POLR3C/RPC3-POLR3F/RPC6-POLR3G/RPC7 heterotrimer required for transcription initiation and POLR3D/RPC4-POLR3E/RPC5 heterodimer involved in both transcription initiation and termination. Directly interacts with POLR3G/RPC7 and POLR3GL. Directly interacts with POLR3F/RPC6. Interacts with GTF3C4. As part of the RNA polymerase III complex, interacts with PKP2.

Its subcellular location is the nucleus. In terms of biological role, DNA-dependent RNA polymerase catalyzes the transcription of DNA into RNA using the four ribonucleoside triphosphates as substrates. Specific peripheric component of RNA polymerase III (Pol III) which synthesizes small non-coding RNAs including 5S rRNA, snRNAs, tRNAs and miRNAs from at least 500 distinct genomic loci. Part of POLR3C/RPC3-POLR3F/RPC6-POLR3G/RPC7 heterotrimer, coordinates the dynamics of Pol III stalk and clamp modules during the transition from apo to elongation state. Pol III plays a key role in sensing and limiting infection by intracellular bacteria and DNA viruses. Acts as a nuclear and cytosolic DNA sensor involved in innate immune response. Can sense non-self dsDNA that serves as template for transcription into dsRNA. The non-self RNA polymerase III transcripts, such as Epstein-Barr virus-encoded RNAs (EBERs) induce type I interferon and NF-kappa-B through the RIG-I pathway. Preferentially binds single-stranded DNA (ssDNA) in a sequence-independent manner. The protein is DNA-directed RNA polymerase III subunit RPC3 of Mus musculus (Mouse).